Reading from the N-terminus, the 270-residue chain is High choriolytic enzyme 1 (270 aa).

Residues Met1–Ala20 form the signal peptide. Positions Leu21–Arg70 are cleaved as a propeptide — activation peptide. The N-linked (GlcNAc...) asparagine glycan is linked to Asn53. Residues Asn71–Arg270 enclose the Peptidase M12A domain. 3 cysteine pairs are disulfide-bonded: Cys75–Cys80, Cys120–Cys269, and Cys141–Cys161. Residue His169 participates in Zn(2+) binding. Residue Glu170 is part of the active site. Zn(2+) contacts are provided by His173 and His179.

Requires Zn(2+) as cofactor.

It is found in the zymogen granule. It carries out the reaction Hydrolysis of the inner layer of fish egg envelope. Also hydrolysis of casein and small molecule substrates such as succinyl-Leu-Leu-Val-Tyr-|-7-(4-methyl)coumarylamide.. Functionally, participates in the breakdown of the egg envelope, which is derived from the egg extracellular matrix, at the time of hatching. Thus allowing the newly hatched fish to swim free. HCE binds tightly to the egg envelope while it exerts the choriolytic swelling action. The chain is High choriolytic enzyme 1 (hcea) from Oryzias latipes (Japanese rice fish).